The primary structure comprises 301 residues: Olfactory receptor 10AG1 (301 aa).

The Extracellular portion of the chain corresponds to 1-16 (MEFVLLGFSDIPNLHW). A helical membrane pass occupies residues 17-37 (MLFSIFLLMYLMILMCNGIII). The Cytoplasmic portion of the chain corresponds to 38–45 (LLIKIHPA). A helical membrane pass occupies residues 46–66 (LQTPMYFFLSNFSLLEICYVT). Residues 67-90 (IIIPRMLMDIWTQKGNISLFACAT) are Extracellular-facing. Asn-82 is a glycosylation site (N-linked (GlcNAc...) asparagine). Cys-88 and Cys-180 are disulfide-bonded. A helical transmembrane segment spans residues 91-111 (QMCFFLMLGGTECLLLTVMAY). The Cytoplasmic segment spans residues 112-130 (DRYVAICKPLQYPLVMNHK). A helical membrane pass occupies residues 131–151 (VCIQLIIASWTITIPVVIGET). The Extracellular segment spans residues 152 to 188 (CQIFLLPFCGTNTINHFFCDIPPILKLACGNIFVNEI). The helical transmembrane segment at 189–208 (TVHVVAVVFITVPFLLIVVS) threads the bilayer. Residues 209–228 (YGKIISNILKLSSARGKAKA) are Cytoplasmic-facing. The chain crosses the membrane as a helical span at residues 229 to 249 (FSTCSSHLIVVILFFGAGTIT). Residues 250 to 262 (YLQPKPHQFQRMG) are Extracellular-facing. A helical membrane pass occupies residues 263 to 283 (KLISLFYTILIPTLNPIIYTL). Residues 284–301 (RNKDIMVALRKLLAKLLT) lie on the Cytoplasmic side of the membrane.

It belongs to the G-protein coupled receptor 1 family.

The protein localises to the cell membrane. In terms of biological role, odorant receptor. The polypeptide is Olfactory receptor 10AG1 (OR10AG1) (Homo sapiens (Human)).